The following is a 220-amino-acid chain: Glutamine amidotransferase-like class 1 domain-containing protein 1 (220 aa).

The N-terminal stretch at 1–35 (MASERLPSRPACLLVASGAAEGVSAQSFLHCFTLA) is a signal peptide. Asn-57 and Asn-201 each carry an N-linked (GlcNAc...) asparagine glycan.

Belongs to the peptidase C56 family. In terms of assembly, homotetramer. Component of the FERRY complex composed of five subunits, TBCK, PPP1R21, FERRY3, CRYZL1 and GATD1 with a ratio of 1:2:1:2:4, respectively.

The protein localises to the secreted. It is found in the early endosome. Its function is as follows. Component of the FERRY complex (Five-subunit Endosomal Rab5 and RNA/ribosome intermediary). The FERRY complex directly interacts with mRNAs and RAB5A, and functions as a RAB5A effector involved in the localization and the distribution of specific mRNAs most likely by mediating their endosomal transport. The complex recruits mRNAs and ribosomes to early endosomes through direct mRNA-interaction. In Bos taurus (Bovine), this protein is Glutamine amidotransferase-like class 1 domain-containing protein 1.